A 354-amino-acid polypeptide reads, in one-letter code: MERYLTKMPIKSKANEVPKKEAFAKKETPKVARKATKTDTPKELKDKENAGDDNTPKQTKGRPGRPAAKRKNLDTPDVKDEKIAMEEENPPKRRSSRLTRSTRSMAEDGSPSPEKEKPEKLPFIKYKGAIKYFTESQDIAASADDVLQWVEKQKDDVVPMAFDMEWPFSFQTGPGKSSVIQICVDEKCCYIYQLTNVKKLPAALVALINHPKVRLHGVNIKNDFRKLARDFPEVTAEPLIEKCVDLGLWCNEVCETGGRWSLERLTNFIAKKAMDKSKKVRMSKWHVIPLDENQLMYAAIDVYIGQVIYRELERREKVKIKNEEEFKEKNGDAAFKAMKTLGETFLTKINEVTL.

Residues 1 to 120 (MERYLTKMPI…PSPEKEKPEK (120 aa)) are disordered. The segment covering 13-50 (KANEVPKKEAFAKKETPKVARKATKTDTPKELKDKENA) has biased composition (basic and acidic residues). The span at 59-70 (TKGRPGRPAAKR) shows a compositional bias: basic residues. Positions 71–91 (KNLDTPDVKDEKIAMEEENPP) are enriched in basic and acidic residues. S104, S110, and S112 each carry phosphoserine. The region spanning 149–314 (WVEKQKDDVV…GQVIYRELER (166 aa)) is the 3'-5' exonuclease domain. Mg(2+) contacts are provided by D163, E165, and D301.

Belongs to the WRNexo family.

The protein resides in the nucleus. Its function is as follows. Has exonuclease activity on both single-stranded and duplex templates bearing overhangs, but not blunt ended duplex DNA, and cleaves in a 3'-5' direction. Essential for the formation of DNA replication focal centers. Has an important role in maintaining genome stability. The sequence is that of 3'-5' exonuclease from Drosophila sechellia (Fruit fly).